A 347-amino-acid polypeptide reads, in one-letter code: D-fructose 1,6-bisphosphatase class 2/sedoheptulose 1,7-bisphosphatase (347 aa).

Mn(2+) contacts are provided by D33, E57, D97, and E100. Residues 100 to 102, Y131, 176 to 178, and 198 to 200 each bind substrate; these read EGT, RKR, and DGD. E225 contributes to the Mn(2+) binding site.

The protein belongs to the FBPase class 2 family. Homotetramer. Mn(2+) serves as cofactor.

It catalyses the reaction beta-D-fructose 1,6-bisphosphate + H2O = beta-D-fructose 6-phosphate + phosphate. It carries out the reaction D-sedoheptulose 1,7-bisphosphate + H2O = D-sedoheptulose 7-phosphate + phosphate. It functions in the pathway carbohydrate biosynthesis; Calvin cycle. In terms of biological role, catalyzes the hydrolysis of fructose 1,6-bisphosphate (Fru 1,6-P2) and sedoheptulose 1,7-bisphosphate (Sed 1,7-P2) to fructose 6-phosphate and sedoheptulose 7-phosphate, respectively. This is D-fructose 1,6-bisphosphatase class 2/sedoheptulose 1,7-bisphosphatase from Synechococcus sp. (strain JA-3-3Ab) (Cyanobacteria bacterium Yellowstone A-Prime).